Reading from the N-terminus, the 199-residue chain is Small ribosomal subunit protein uS2 (199 aa).

Belongs to the universal ribosomal protein uS2 family.

This chain is Small ribosomal subunit protein uS2 (rps2), found in Thermoplasma volcanium (strain ATCC 51530 / DSM 4299 / JCM 9571 / NBRC 15438 / GSS1).